The chain runs to 1017 residues: MPVMKGLLAPQNTFLDTIATRFDGTHSNFLLANAQGPRGFPIVYCSDGFCELTGYGRTEVMQKTCSCRFLYGPETSEPALQRLQKALEGHQEHRAEICFYRKDGSAFWCLLDMMPIKNELGEVVLFLFSFKDISQSGGPGLGSPGIHGDNNNHENSLGRRGASSRLRSTRRQNRTVLHRLTGHFGRRDQGSVKANSNVFEPKPSVPEYKVASVGGSRCLLLHYSIPKAVWDGLILLATFYVAVTVPYNVCFAGDDDTPITSRHTLVSDIAVEMLFILDIILNFRTTYVSQSGQVVSAPRSIGLHYLATWFFVDLIAALPFDLLYVFNITVTSLVHLLKTVRLLRLLRLLQKLERYSQCSAVVLTLLMSVFALLAHWMACVWYVIGRREMEANDPLLWDIGWLHELGKRLEEPYVNGSAGGPSRRSAYIAALYFTLSSLTSVGFGNVCANTDAEKIFSICTMLIGALMHAVVFGNVTAIIQRMYSRRSLYHSRMKDLKDFIRVHRLPRPLKQRMLEYFQTTWAVNSGIDANELLRDFPDELRADIAMHLNREILQLPLFGAASRGCLRALSLHIKTSFCAPGEFLLRRGDALQAHYYVCSGSLEVLRDNTVLAILGKGDLIGADIPELGQEPGAGAGCVLKTSADVKALTYCGLQQLSSRGLAEVLRLYPEYVAAFRAGLPRDLTFNLRQGSENNGLGRFSRSPRLSQARSDTLGSSSDKTLPSITETEGGMEPGAGSKPRRPLLLPNLSPARPRGSLVSLLGEELPPFSALVSSPSLSPTPSPALAGRGSSPSLHGPPRGSAAWKPPQLLTPPLGTFGPPDLSPRIVDGIEDSSNTAEAPTFRFSKRPEPTRTRSQAPLSGPRLSRELATEAAEEVKEKVCRLNQEISRLNQEVSQLSRELRQVMGLLQARLGPPSHPPDSTWLPDLPCPHQRPPCISPHMSGPPPGLQNTTLAVVHCPASVGTVEIGATPSELRSSMVPPFPSEPDPLGPSPVPEASPLTPSLLKHSFQSGSDTFH.

Topologically, residues 1–232 (MPVMKGLLAP…YSIPKAVWDG (232 aa)) are cytoplasmic. The PAS domain maps to 14–90 (FLDTIATRFD…QRLQKALEGH (77 aa)). One can recognise a PAC domain in the interval 93–145 (HRAEICFYRKDGSAFWCLLDMMPIKNELGEVVLFLFSFKDISQSGGPGLGSPG). The segment at 139–170 (PGLGSPGIHGDNNNHENSLGRRGASSRLRSTR) is disordered. The helical transmembrane segment at 233–253 (LILLATFYVAVTVPYNVCFAG) threads the bilayer. Over 254-262 (DDDTPITSR) the chain is Extracellular. The chain crosses the membrane as a helical span at residues 263-283 (HTLVSDIAVEMLFILDIILNF). Residues 284–305 (RTTYVSQSGQVVSAPRSIGLHY) lie on the Cytoplasmic side of the membrane. Residues 306 to 326 (LATWFFVDLIAALPFDLLYVF) traverse the membrane as a helical segment. Residues 327-334 (NITVTSLV) are Extracellular-facing. The helical; Voltage-sensor transmembrane segment at 335–355 (HLLKTVRLLRLLRLLQKLERY) threads the bilayer. Residues 356-364 (SQCSAVVLT) are Cytoplasmic-facing. The helical transmembrane segment at 365 to 385 (LLMSVFALLAHWMACVWYVIG) threads the bilayer. The Extracellular portion of the chain corresponds to 386-427 (RREMEANDPLLWDIGWLHELGKRLEEPYVNGSAGGPSRRSAY). Asn415 carries N-linked (GlcNAc...) asparagine glycosylation. Residues 428-448 (IAALYFTLSSLTSVGFGNVCA) constitute an intramembrane region (pore-forming). The Selectivity filter motif lies at 440-445 (SVGFGN). Residues 449 to 454 (NTDAEK) are Extracellular-facing. The chain crosses the membrane as a helical span at residues 455–475 (IFSICTMLIGALMHAVVFGNV). At 476–1017 (TAIIQRMYSR…SFQSGSDTFH (542 aa)) the chain is on the cytoplasmic side. Residues 557-621 (LFGAASRGCL…AILGKGDLIG (65 aa)) form a cNMP-binding domain region. Disordered regions lie at residues 690–749 (GSEN…PNLS) and 771–870 (LVSS…ELAT). Positions 703–726 (PRLSQARSDTLGSSSDKTLPSITE) are enriched in polar residues. Low complexity-rich tracts occupy residues 771 to 786 (LVSS…PALA) and 806 to 820 (PPQL…FGPP). Residues 873–907 (AEEVKEKVCRLNQEISRLNQEVSQLSRELRQVMGL) adopt a coiled-coil conformation. The segment at 972 to 1017 (SELRSSMVPPFPSEPDPLGPSPVPEASPLTPSLLKHSFQSGSDTFH) is disordered. Residues 980–996 (PPFPSEPDPLGPSPVPE) show a composition bias toward pro residues. The span at 1008-1017 (SFQSGSDTFH) shows a compositional bias: polar residues.

The protein belongs to the potassium channel family. H (Eag) (TC 1.A.1.20) subfamily. Kv12.3/KCNH4 sub-subfamily. In terms of assembly, the potassium channel is probably composed of a homo- or heterotetrameric complex of pore-forming alpha subunits that can associate with modulating beta subunits. Highly expressed in adult testis, and in adult and embryonic brain. In adult brain found in piriform cortex, olfactory tubercle, cerebral cortex, hippocampus pyramidial cells and dentate gyrus and basal ganglia of caudate/putamen and accumbens nucleus. Detected at intermediate levels in lung, spinal cord, and pituitary.

The protein resides in the membrane. The enzyme catalyses K(+)(in) = K(+)(out). In terms of biological role, pore-forming (alpha) subunit of a voltage-gated delayed rectifier. Activates at more negative voltages, exhibits fast prepulse-independent activation kinetics and deactivates much more slowly, but shows no inactivation. In Rattus norvegicus (Rat), this protein is Voltage-gated delayed rectifier potassium channel KCNH4.